We begin with the raw amino-acid sequence, 4128 residues long: DNA-dependent protein kinase catalytic subunit (4128 aa).

K117 carries the post-translational modification N6-acetyllysine. One copy of the HEAT 1 repeat lies at D288 to V323. A phosphoserine mark is found at S511 and S687. An N6-acetyllysine modification is found at K828. A phosphoserine mark is found at S841 and S893. An HEAT 2 repeat occupies Q1004 to S1040. Residue S1065 is modified to Phosphoserine. K1209 is subject to N6-acetyllysine. The tract at residues L1503 to L1538 is interaction with C1D. The leucine-zipper stretch occupies residues L1503–L1538. The stretch at P1723 to P1756 is one TPR 1 repeat. K1970 bears the N6-acetyllysine mark. A disordered region spans residues Q2050 to D2073. At S2056 the chain carries Phosphoserine; by autocatalysis. At K2259 the chain carries N6-acetyllysine. The tract at residues L2436 to G3212 is KIP-binding. T2535 carries the post-translational modification Phosphothreonine. T2609 carries the post-translational modification Phosphothreonine; by autocatalysis. S2612 bears the Phosphoserine; by autocatalysis mark. Phosphothreonine; by autocatalysis occurs at positions 2638 and 2647. Positions E2737–Q2765 are may split the end of the DNA molecule, with the two strands separating around the region. Position 2789 is a phosphoserine (S2789). An FAT domain is found at P2906 to S3539. TPR repeat units lie at residues V2920 to G2948 and T2949 to V2982. The interval L3200–E3222 is disordered. Residue S3205 is modified to Phosphoserine. N6-acetyllysine occurs at positions 3241, 3260, 3621, 3638, and 3642. Residues F3722–G4053 form the PI3K/PI4K catalytic domain. A G-loop region spans residues V3728–R3734. Phosphoserine occurs at positions 3731 and 3821. The tract at residues G3919–N3927 is catalytic loop. The activation loop stretch occupies residues G3939–T3964. Phosphoserine is present on S4026. The region spanning S4096–M4128 is the FATC domain.

It belongs to the PI3/PI4-kinase family. In terms of assembly, DNA-PK is a heterotrimer of PRKDC and the Ku dimer (composed of XRCC6/Ku70 and XRCC5/Ku86). Formation of this complex may be promoted by interaction with ILF3. Component of the core long-range non-homologous end joining (NHEJ) complex (also named DNA-PK complex) composed of PRKDC, LIG4, XRCC4, XRCC6/Ku70, XRCC5/Ku86 and NHEJ1/XLF. Additional component of the NHEJ complex includes PAXX. Following autophosphorylation, PRKDC dissociates from DNA. Interacts with DNA-PKcs-interacting protein (KIP) with the region upstream the kinase domain. PRKDC alone also interacts with and phosphorylates DCLRE1C, thereby activating the latent endonuclease activity of this protein. Interacts with C1D. Interacts with TTI1 and TELO2. Interacts with CIB1. Interacts with SETX. Interacts with NR4A3; the DNA-dependent protein kinase complex DNA-PK phosphorylates and activates NR4A3 and prevents NR4A3 ubiquitination and degradation. Interacts with BRAT1. Part of the HDP-RNP complex composed of at least HEXIM1, PRKDC, XRCC5, XRCC6, paraspeckle proteins (SFPQ, NONO, PSPC1, RBM14, and MATR3) and NEAT1 RNA. Interacts with KAT5. In terms of processing, autophosphorylated at two clusters, the T2609 cluster and the S2056 cluster. Autophosphorylated on Ser-2056, Thr-2609, Thr-2638 and Thr-2647. Ser-2056 and Thr-2609 are DNA damage-inducible phosphorylation sites (inducible with ionizing radiation, IR) dephosphorylated by PPP5C. Autophosphorylation induces a conformational change that leads to remodeling of the DNA-PK complex, requisite for efficient end processing and DNA repair. Autophosphorylation in trans within DNA-PK complexes loaded on DNA ends leads to the dissociation of PRKDC from DNA and the transition into the short-range NHEJ complex. Autophosphorylation of the T2609 cluster is required for hematopoietic development and protein synthesis in erythrocytes precursors. Post-translationally, S-nitrosylated by GAPDH. Polyubiquitinated by RNF144A, leading to proteasomal degradation.

It is found in the nucleus. Its subcellular location is the nucleolus. The protein resides in the cytoplasm. It localises to the cytosol. It catalyses the reaction L-seryl-[protein] + ATP = O-phospho-L-seryl-[protein] + ADP + H(+). The catalysed reaction is L-threonyl-[protein] + ATP = O-phospho-L-threonyl-[protein] + ADP + H(+). Its activity is regulated as follows. Activity seems to be attenuated by autophosphorylation. Binding to the SL1 region of U3 small nucleolar RNA promotes auto-phosphorylation activity. Inhibited by wortmannin. Its function is as follows. Serine/threonine-protein kinase that acts as a molecular sensor for DNA damage. Involved in DNA non-homologous end joining (NHEJ) required for double-strand break (DSB) repair and V(D)J recombination. Must be bound to DNA to express its catalytic properties. Promotes processing of hairpin DNA structures in V(D)J recombination by activation of the hairpin endonuclease artemis (DCLRE1C). Recruited by XRCC5 and XRCC6 to DNA ends and is required to (1) protect and align broken ends of DNA, thereby preventing their degradation, (2) and sequester the DSB for repair by NHEJ. Acts as a scaffold protein to aid the localization of DNA repair proteins to the site of damage. The assembly of the DNA-PK complex at DNA ends is also required for the NHEJ ligation step. Found at the ends of chromosomes, suggesting a further role in the maintenance of telomeric stability and the prevention of chromosomal end fusion. Also involved in modulation of transcription. As part of the DNA-PK complex, involved in the early steps of ribosome assembly by promoting the processing of precursor rRNA into mature 18S rRNA in the small-subunit processome. Binding to U3 small nucleolar RNA, recruits PRKDC and XRCC5/Ku86 to the small-subunit processome. Recognizes the substrate consensus sequence [ST]-Q. Phosphorylates 'Ser-139' of histone variant H2AX, thereby regulating DNA damage response mechanism. Phosphorylates ASF1A, DCLRE1C, c-Abl/ABL1, histone H1, HSPCA, c-jun/JUN, p53/TP53, PARP1, POU2F1, DHX9, FH, SRF, NHEJ1/XLF, XRCC1, XRCC4, XRCC5, XRCC6, WRN, MYC and RFA2. Can phosphorylate C1D not only in the presence of linear DNA but also in the presence of supercoiled DNA. Ability to phosphorylate p53/TP53 in the presence of supercoiled DNA is dependent on C1D. Acts as a regulator of the phosphatidylinositol 3-kinase/protein kinase B signal transduction by mediating phosphorylation of 'Ser-473' of protein kinase B (PKB/AKT1, PKB/AKT2, PKB/AKT3), promoting their activation. Contributes to the determination of the circadian period length by antagonizing phosphorylation of CRY1 'Ser-588' and increasing CRY1 protein stability, most likely through an indirect mechanism. Plays a role in the regulation of DNA virus-mediated innate immune response by assembling into the HDP-RNP complex, a complex that serves as a platform for IRF3 phosphorylation and subsequent innate immune response activation through the cGAS-STING pathway. Also regulates the cGAS-STING pathway by catalyzing phosphorylation of CGAS, thereby impairing CGAS oligomerization and activation. Also regulates the cGAS-STING pathway by mediating phosphorylation of PARP1. The chain is DNA-dependent protein kinase catalytic subunit (PRKDC) from Homo sapiens (Human).